A 308-amino-acid polypeptide reads, in one-letter code: tRNA dimethylallyltransferase (308 aa).

10–17 (GPTASGKT) serves as a coordination point for ATP. Position 12–17 (12–17 (TASGKT)) interacts with substrate. Interaction with substrate tRNA stretches follow at residues 35–38 (DSSL) and 159–163 (QRIFR).

Belongs to the IPP transferase family. In terms of assembly, monomer. It depends on Mg(2+) as a cofactor.

It catalyses the reaction adenosine(37) in tRNA + dimethylallyl diphosphate = N(6)-dimethylallyladenosine(37) in tRNA + diphosphate. Catalyzes the transfer of a dimethylallyl group onto the adenine at position 37 in tRNAs that read codons beginning with uridine, leading to the formation of N6-(dimethylallyl)adenosine (i(6)A). The chain is tRNA dimethylallyltransferase from Francisella philomiragia subsp. philomiragia (strain ATCC 25017 / CCUG 19701 / FSC 153 / O#319-036).